The following is a 283-amino-acid chain: GDP-polyphosphate phosphotransferase (283 aa).

It belongs to the polyphosphate kinase 2 (PPK2) family. Class I subfamily.

It catalyses the reaction [phosphate](n) + GTP = [phosphate](n+1) + GDP. In terms of biological role, uses inorganic polyphosphate (polyP) as a donor to convert GDP to GTP. This Mycolicibacterium smegmatis (strain ATCC 700084 / mc(2)155) (Mycobacterium smegmatis) protein is GDP-polyphosphate phosphotransferase.